A 344-amino-acid chain; its full sequence is 3,4-dihydroxy-2-butanone 4-phosphate synthase (344 aa).

The DHBP synthase stretch occupies residues 1–202 (MILKRVTEAL…VSDLISYRLE (202 aa)). D-ribulose 5-phosphate contacts are provided by residues 27-28 (RE), Asp32, 139-143 (RTGHT), and Glu163. Residue Glu28 coordinates Mg(2+). His142 lines the Mg(2+) pocket. Residues 203–344 (NESLLKMFCQ…GLKLVETISL (142 aa)) are GTP cyclohydrolase II-like.

This sequence in the N-terminal section; belongs to the DHBP synthase family. The protein in the C-terminal section; belongs to the GTP cyclohydrolase II family. It depends on Mg(2+) as a cofactor. Requires Mn(2+) as cofactor.

The catalysed reaction is D-ribulose 5-phosphate = (2S)-2-hydroxy-3-oxobutyl phosphate + formate + H(+). It functions in the pathway cofactor biosynthesis; riboflavin biosynthesis; 2-hydroxy-3-oxobutyl phosphate from D-ribulose 5-phosphate: step 1/1. Its function is as follows. Catalyzes the conversion of D-ribulose 5-phosphate to formate and 3,4-dihydroxy-2-butanone 4-phosphate. This Helicobacter pylori (strain ATCC 700392 / 26695) (Campylobacter pylori) protein is 3,4-dihydroxy-2-butanone 4-phosphate synthase (ribB).